The following is a 257-amino-acid chain: Acetylglutamate kinase (257 aa).

Residues 43–44 (GG), R65, and N157 contribute to the substrate site.

Belongs to the acetylglutamate kinase family. ArgB subfamily.

Its subcellular location is the cytoplasm. It catalyses the reaction N-acetyl-L-glutamate + ATP = N-acetyl-L-glutamyl 5-phosphate + ADP. It participates in amino-acid biosynthesis; L-arginine biosynthesis; N(2)-acetyl-L-ornithine from L-glutamate: step 2/4. Its function is as follows. Catalyzes the ATP-dependent phosphorylation of N-acetyl-L-glutamate. The chain is Acetylglutamate kinase from Mannheimia succiniciproducens (strain KCTC 0769BP / MBEL55E).